Here is a 92-residue protein sequence, read N- to C-terminus: Transcription factor PRE1 (92 aa).

In terms of domain architecture, bHLH spans 4–59; that stretch reads RRSRQSSSAPRISDNQMIDLVSKLRQILPEIGQRRRSDKASASKVLQETCNYIRNL.

Interacts with IBH1 and HFR1. In terms of tissue distribution, expressed in roots, leaves, stems and flowers.

The protein resides in the nucleus. Its function is as follows. Atypical and probable non DNA-binding bHLH transcription factor that integrates multiple signaling pathways to regulate cell elongation and plant development. Binds IBH1, forming a pair of antagonistic bHLH transcription factors that function downstream of BZR1 to mediate brassinosteroid regulation of cell elongation. Regulates light responses by binding and inhibiting the activity of the bHLH transcription factor HFR1, a critical regulator of light signaling and shade avoidance. May have a regulatory role in various aspects of gibberellin-dependent growth and development. The protein is Transcription factor PRE1 (PRE1) of Arabidopsis thaliana (Mouse-ear cress).